Reading from the N-terminus, the 403-residue chain is S-adenosylmethionine synthase (403 aa).

Residue 141-146 participates in ATP binding; the sequence is GQGSVD.

Belongs to the AdoMet synthase 2 family. Mg(2+) is required as a cofactor.

It carries out the reaction L-methionine + ATP + H2O = S-adenosyl-L-methionine + phosphate + diphosphate. The protein operates within amino-acid biosynthesis; S-adenosyl-L-methionine biosynthesis; S-adenosyl-L-methionine from L-methionine: step 1/1. Functionally, catalyzes the formation of S-adenosylmethionine from methionine and ATP. This is S-adenosylmethionine synthase from Methanococcus aeolicus (strain ATCC BAA-1280 / DSM 17508 / OCM 812 / Nankai-3).